Consider the following 83-residue polypeptide: Protein YciN (83 aa).

This is Protein YciN (yciN) from Escherichia coli O157:H7.